The chain runs to 350 residues: Phosphotriesterase-related protein (350 aa).

Histidine 24, histidine 26, glutamate 170, histidine 202, histidine 231, and aspartate 299 together coordinate a divalent metal cation.

It belongs to the metallo-dependent hydrolases superfamily. Phosphotriesterase family. Requires a divalent metal cation as cofactor.

This is Phosphotriesterase-related protein from Nematostella vectensis (Starlet sea anemone).